The sequence spans 426 residues: Gamma-glutamyl phosphate reductase (426 aa).

It belongs to the gamma-glutamyl phosphate reductase family.

Its subcellular location is the cytoplasm. It catalyses the reaction L-glutamate 5-semialdehyde + phosphate + NADP(+) = L-glutamyl 5-phosphate + NADPH + H(+). It participates in amino-acid biosynthesis; L-proline biosynthesis; L-glutamate 5-semialdehyde from L-glutamate: step 2/2. In terms of biological role, catalyzes the NADPH-dependent reduction of L-glutamate 5-phosphate into L-glutamate 5-semialdehyde and phosphate. The product spontaneously undergoes cyclization to form 1-pyrroline-5-carboxylate. In Acidovorax ebreus (strain TPSY) (Diaphorobacter sp. (strain TPSY)), this protein is Gamma-glutamyl phosphate reductase.